Consider the following 570-residue polypeptide: Urease subunit alpha 1 (570 aa).

The Urease domain occupies 131 to 570 (GGIDTHVHFI…VPMAQRYFLF (440 aa)). Residues H136, H138, and K219 each contribute to the Ni(2+) site. Residue K219 is modified to N6-carboxylysine. H221 contributes to the substrate binding site. 2 residues coordinate Ni(2+): H248 and H274. The active-site Proton donor is the H322. Residue D362 participates in Ni(2+) binding.

The protein belongs to the metallo-dependent hydrolases superfamily. Urease alpha subunit family. Heterotrimer of UreA (gamma), UreB (beta) and UreC (alpha) subunits. Three heterotrimers associate to form the active enzyme. Ni cation serves as cofactor. In terms of processing, carboxylation allows a single lysine to coordinate two nickel ions.

It is found in the cytoplasm. It carries out the reaction urea + 2 H2O + H(+) = hydrogencarbonate + 2 NH4(+). It functions in the pathway nitrogen metabolism; urea degradation; CO(2) and NH(3) from urea (urease route): step 1/1. Functionally, disrupting the ure1 operon causes loss of urease activity, decreased resistance to low pH killing in vitro and decreased pathogen survival when inoculated in BALB/c mice by gavage. This chain is Urease subunit alpha 1, found in Brucella suis biovar 1 (strain 1330).